Consider the following 351-residue polypeptide: MTQAWWRDACHPLDNDAMDQAHARQQQLTKPAGSLGQLEGLAIQLAGLQGCERPILDQVAITIFAGDHGVVEEGISAYPQAVTGQMLRNFVGGGAAISVLARQLQASLEVVDLGTIDAQLELPGVRHLRLGAGTANFACQPAMTENQLQAALQAGRDSALRAAEQGAQLFIGGEMGIGNTTAAAALASVLLSCPAAQLSGPGTGLDNAGVRHKAEVIERALRLHGLRAENPLQALGCVGGFEIAALAGAYIGCAQAGVAVLVDGFICSVAALVAVHLNPQCRAWLLFAHQGAEPGHKALLAALQAEPLLALGLRLGEGSGAALAVPLLRLACALHGQMATFAEAAVADRPA.

E317 (proton acceptor) is an active-site residue.

It belongs to the CobT family.

It carries out the reaction 5,6-dimethylbenzimidazole + nicotinate beta-D-ribonucleotide = alpha-ribazole 5'-phosphate + nicotinate + H(+). Its pathway is nucleoside biosynthesis; alpha-ribazole biosynthesis; alpha-ribazole from 5,6-dimethylbenzimidazole: step 1/2. Its function is as follows. Catalyzes the synthesis of alpha-ribazole-5'-phosphate from nicotinate mononucleotide (NAMN) and 5,6-dimethylbenzimidazole (DMB). The sequence is that of Nicotinate-nucleotide--dimethylbenzimidazole phosphoribosyltransferase from Pseudomonas putida (strain GB-1).